Reading from the N-terminus, the 245-residue chain is UPF0319 protein VV0984 (245 aa).

The N-terminal stretch at 1–20 (MRYIGKWMMLGALVSSSVFA) is a signal peptide.

It belongs to the UPF0319 family.

The chain is UPF0319 protein VV0984 from Vibrio vulnificus (strain YJ016).